The chain runs to 432 residues: Adenylosuccinate synthetase (432 aa).

Residues 13-19 and 41-43 each bind GTP; these read GDEGKGK and GHT. Residue D14 is the Proton acceptor of the active site. Positions 14 and 41 each coordinate Mg(2+). IMP is bound by residues 14–17, 39–42, T130, R144, Q225, T240, and R304; these read DEGK and NAGH. The active-site Proton donor is the H42. Residue 300-306 coordinates substrate; it reads ATTGRSR. GTP contacts are provided by residues R306, 332–334, and 415–417; these read KLD and STG.

It belongs to the adenylosuccinate synthetase family. Homodimer. Requires Mg(2+) as cofactor.

It localises to the cytoplasm. The catalysed reaction is IMP + L-aspartate + GTP = N(6)-(1,2-dicarboxyethyl)-AMP + GDP + phosphate + 2 H(+). It functions in the pathway purine metabolism; AMP biosynthesis via de novo pathway; AMP from IMP: step 1/2. Its function is as follows. Plays an important role in the de novo pathway of purine nucleotide biosynthesis. Catalyzes the first committed step in the biosynthesis of AMP from IMP. The chain is Adenylosuccinate synthetase from Yersinia pseudotuberculosis serotype O:1b (strain IP 31758).